The primary structure comprises 876 residues: Leucine--tRNA ligase (876 aa).

Residues 42 to 52 (PYPSGKLHMGH) carry the 'HIGH' region motif. Residues 634–638 (KMSKS) carry the 'KMSKS' region motif. Lys637 contacts ATP.

It belongs to the class-I aminoacyl-tRNA synthetase family.

The protein resides in the cytoplasm. It catalyses the reaction tRNA(Leu) + L-leucine + ATP = L-leucyl-tRNA(Leu) + AMP + diphosphate. This chain is Leucine--tRNA ligase, found in Neisseria meningitidis serogroup C / serotype 2a (strain ATCC 700532 / DSM 15464 / FAM18).